A 205-amino-acid chain; its full sequence is Transcriptional regulator GfcR (205 aa).

The protein belongs to the purine/pyrimidine phosphoribosyltransferase family. GfcR subfamily.

This is Transcriptional regulator GfcR from Methanococcus maripaludis (strain DSM 14266 / JCM 13030 / NBRC 101832 / S2 / LL).